We begin with the raw amino-acid sequence, 193 residues long: Peptidyl-tRNA hydrolase (193 aa).

A tRNA-binding site is contributed by H17. Residue H22 is the Proton acceptor of the active site. Residues F68, N70, and N116 each contribute to the tRNA site.

It belongs to the PTH family. Monomer.

The protein resides in the cytoplasm. The catalysed reaction is an N-acyl-L-alpha-aminoacyl-tRNA + H2O = an N-acyl-L-amino acid + a tRNA + H(+). In terms of biological role, hydrolyzes ribosome-free peptidyl-tRNAs (with 1 or more amino acids incorporated), which drop off the ribosome during protein synthesis, or as a result of ribosome stalling. Functionally, catalyzes the release of premature peptidyl moieties from peptidyl-tRNA molecules trapped in stalled 50S ribosomal subunits, and thus maintains levels of free tRNAs and 50S ribosomes. The chain is Peptidyl-tRNA hydrolase from Xanthomonas campestris pv. campestris (strain 8004).